Consider the following 330-residue polypeptide: Heat-inducible transcription repressor HrcA (330 aa).

It belongs to the HrcA family.

In terms of biological role, negative regulator of class I heat shock genes (grpE-dnaK-dnaJ and groELS operons). Prevents heat-shock induction of these operons. In Synechococcus sp. (strain RCC307), this protein is Heat-inducible transcription repressor HrcA.